The primary structure comprises 90 residues: MMKTTIMFMLVVVISLTYSSEEQEVARTYCGAHLANTLADLCFGVEKRSGAQYAPYFWTRQYLGSRGKRGVVDECCFRPCTLDVLLSYCG.

Residues 1 to 20 (MMKTTIMFMLVVVISLTYSS) form the signal peptide. Cystine bridges form between cysteine 30–cysteine 76, cysteine 42–cysteine 89, and cysteine 75–cysteine 80. Residues 49–67 (SGAQYAPYFWTRQYLGSRG) constitute a propeptide, c peptide like.

It belongs to the insulin family. As to quaternary structure, heterodimer of a B chain and an A chain linked by two disulfide bonds.

The protein localises to the secreted. Brain peptide responsible for activation of prothoracic glands to produce ecdysone in insects. This is Bombyxin B-3 (BBXB3) from Bombyx mori (Silk moth).